The primary structure comprises 747 residues: Probable type III restriction-modification enzyme HindVI Mod subunit (747 aa).

The tract at residues Asp267–Tyr270 is binding of S-adenosyl methionine.

Belongs to the N(4)/N(6)-methyltransferase family. In terms of assembly, homodimer, also forms a functional restriction-competent complex with Res.

The catalysed reaction is a 2'-deoxyadenosine in DNA + S-adenosyl-L-methionine = an N(6)-methyl-2'-deoxyadenosine in DNA + S-adenosyl-L-homocysteine + H(+). A beta subtype methylase that binds the system-specific DNA recognition site 5'-CGAAT-3' and methylates A-4 (of only 1 strand). DNA restriction requires both the Res and Mod subunits. This Haemophilus influenzae (strain ATCC 51907 / DSM 11121 / KW20 / Rd) protein is Probable type III restriction-modification enzyme HindVI Mod subunit.